The following is a 121-amino-acid chain: UPF0102 protein XF_0554 (121 aa).

This sequence belongs to the UPF0102 family.

This is UPF0102 protein XF_0554 from Xylella fastidiosa (strain 9a5c).